Consider the following 273-residue polypeptide: L-fucose dehydrogenase (273 aa).

Residues R19, I21, D40, K41, D62, V63, N89, Y154, K158, I187, T189, and L191 each contribute to the NAD(+) site. The Proton acceptor role is filled by Y154.

It belongs to the short-chain dehydrogenases/reductases (SDR) family. Homotetramer.

It is found in the cytoplasm. It catalyses the reaction L-fucose + NAD(+) = L-fucono-1,5-lactone + NADH + H(+). The enzyme catalyses D-arabinose + NAD(+) = D-arabinono-1,5-lactone + NADH + H(+). It carries out the reaction L-galactose + NAD(+) = L-galactono-1,5-lactone + NADH + H(+). The protein operates within carbohydrate degradation; L-fucose degradation. Catalyzes the NAD(+)-dependent oxidation of L-fucose, yielding L-fucono-1,5-lactone, which rapidly converts spontaneously to L-fucone-1,4-lactone. Can also act on D-arabinose and L-galactose, with lower catalytic efficiency. Does not use NADPH. May be the initial enzyme of the putative L-fucose degradation pathway in mammals. In Mus musculus (Mouse), this protein is L-fucose dehydrogenase.